The following is a 233-amino-acid chain: Large ribosomal subunit protein uL1 (233 aa).

This sequence belongs to the universal ribosomal protein uL1 family. In terms of assembly, part of the 50S ribosomal subunit.

Its function is as follows. Binds directly to 23S rRNA. The L1 stalk is quite mobile in the ribosome, and is involved in E site tRNA release. In terms of biological role, protein L1 is also a translational repressor protein, it controls the translation of the L11 operon by binding to its mRNA. This chain is Large ribosomal subunit protein uL1, found in Syntrophotalea carbinolica (strain DSM 2380 / NBRC 103641 / GraBd1) (Pelobacter carbinolicus).